A 64-amino-acid polypeptide reads, in one-letter code: Beta-defensin 5 (64 aa).

The signal sequence occupies residues 1–23; sequence MKIHYLLFAFLLVLLSPLAGVFS. 3 cysteine pairs are disulfide-bonded: Cys32–Cys60, Cys39–Cys53, and Cys43–Cys61.

It belongs to the beta-defensin family.

It localises to the secreted. Functionally, has antibacterial activity. This is Beta-defensin 5 (Defb5) from Mus musculus (Mouse).